The primary structure comprises 433 residues: Enolase (433 aa).

Glutamine 167 provides a ligand contact to (2R)-2-phosphoglycerate. The Proton donor role is filled by glutamate 209. Aspartate 246, glutamate 291, and aspartate 318 together coordinate Mg(2+). The (2R)-2-phosphoglycerate site is built by lysine 343, arginine 372, serine 373, and lysine 394. Lysine 343 acts as the Proton acceptor in catalysis.

It belongs to the enolase family. Component of the RNA degradosome, a multiprotein complex involved in RNA processing and mRNA degradation. Mg(2+) is required as a cofactor.

It is found in the cytoplasm. Its subcellular location is the secreted. It localises to the cell surface. The catalysed reaction is (2R)-2-phosphoglycerate = phosphoenolpyruvate + H2O. The protein operates within carbohydrate degradation; glycolysis; pyruvate from D-glyceraldehyde 3-phosphate: step 4/5. Its function is as follows. Catalyzes the reversible conversion of 2-phosphoglycerate (2-PG) into phosphoenolpyruvate (PEP). It is essential for the degradation of carbohydrates via glycolysis. This chain is Enolase, found in Shewanella piezotolerans (strain WP3 / JCM 13877).